Reading from the N-terminus, the 101-residue chain is Small ribosomal subunit protein uS14 (101 aa).

Belongs to the universal ribosomal protein uS14 family. In terms of assembly, part of the 30S ribosomal subunit. Contacts proteins S3 and S10.

In terms of biological role, binds 16S rRNA, required for the assembly of 30S particles and may also be responsible for determining the conformation of the 16S rRNA at the A site. The polypeptide is Small ribosomal subunit protein uS14 (Ehrlichia chaffeensis (strain ATCC CRL-10679 / Arkansas)).